The following is a 174-amino-acid chain: Variant surface antigen F (174 aa).

The first 29 residues, 1 to 29, serve as a signal peptide directing secretion; it reads MKKSIFSKKLLFSFGSLVALAAIPLITIS. A lipid anchor (N-palmitoyl cysteine) is attached at C30. Residue C30 is the site of S-diacylglycerol cysteine attachment. A disordered region spans residues 32–174; the sequence is QTNTDQSQQP…PEQGNSQVSK (143 aa). Positions 43-53 are enriched in gly residues; it reads SGSGSGSGTSN. 9 tandem repeats follow at residues 55–67, 68–80, 81–93, 94–106, 107–119, 120–132, 133–145, 146–158, and 159–171. The interval 55–171 is 9 X 13 AA tandem repeats; that stretch reads SGSTPTPEQG…TPTPEQGNSQ (117 aa). The span at 62-174 shows a compositional bias: polar residues; sequence EQGNNQGGST…PEQGNSQVSK (113 aa).

The protein localises to the cell membrane. In terms of biological role, responsible for the antigenic diversity for host adaptation. Expression in E.coli of a construct containing vlpD, vlpE, and vlpF yields antigenically distinguishable products corresponding to each gene. This is Variant surface antigen F (vlpF) from Mesomycoplasma hyorhinis (Mycoplasma hyorhinis).